A 529-amino-acid chain; its full sequence is uncharacterized protein (529 aa).

Positions 1 to 20 (MYFLILILVLLLIMVAAATA) are cleaved as a signal peptide.

This is an uncharacterized protein from Orgyia pseudotsugata multicapsid polyhedrosis virus (OpMNPV).